We begin with the raw amino-acid sequence, 747 residues long: Fatty acid oxidation complex subunit alpha (747 aa).

The segment at 1–197 (MGASATNSVT…KMGLVDDVVP (197 aa)) is enoyl-CoA hydratase. The 3-hydroxyacyl-CoA dehydrogenase stretch occupies residues 313–747 (RAIHRVGVLG…NIDEVTDVAS (435 aa)). The interval 590–614 (YLYSNPTKNSSPTKNGNSPAKRNSF) is disordered. Residues 593-610 (SNPTKNSSPTKNGNSPAK) are compositionally biased toward polar residues.

This sequence in the N-terminal section; belongs to the enoyl-CoA hydratase/isomerase family. The protein in the central section; belongs to the 3-hydroxyacyl-CoA dehydrogenase family. In terms of assembly, heterotetramer of two alpha chains (FadJ) and two beta chains (FadI).

Its subcellular location is the cytoplasm. The enzyme catalyses a (3S)-3-hydroxyacyl-CoA = a (2E)-enoyl-CoA + H2O. The catalysed reaction is a 4-saturated-(3S)-3-hydroxyacyl-CoA = a (3E)-enoyl-CoA + H2O. It carries out the reaction a (3S)-3-hydroxyacyl-CoA + NAD(+) = a 3-oxoacyl-CoA + NADH + H(+). It catalyses the reaction (3S)-3-hydroxybutanoyl-CoA = (3R)-3-hydroxybutanoyl-CoA. The protein operates within lipid metabolism; fatty acid beta-oxidation. Catalyzes the formation of a hydroxyacyl-CoA by addition of water on enoyl-CoA. Also exhibits 3-hydroxyacyl-CoA epimerase and 3-hydroxyacyl-CoA dehydrogenase activities. The chain is Fatty acid oxidation complex subunit alpha from Yersinia pseudotuberculosis serotype O:1b (strain IP 31758).